A 1536-amino-acid polypeptide reads, in one-letter code: Tyrosine-protein kinase BAZ1B (1536 aa).

The WAC domain occupies 25 to 130 (EVYTIEHTKE…GEKCDLMVGN (106 aa)). Disordered regions lie at residues 144 to 207 (LENP…TTMK), 304 to 470 (PSTK…GKPF), and 557 to 579 (LREK…SRRY). 2 stretches are compositionally biased toward basic and acidic residues: residues 151 to 196 (NAEK…DRAR) and 334 to 343 (AKGDKKKNKD). Residues 344-355 (SQNIPLSPTIWS) are compositionally biased toward polar residues. Basic and acidic residues predominate over residues 392-401 (KQGDKKSSDP). A compositionally biased stretch (low complexity) spans 443–452 (AKSPAAAGSP). Residues 515-583 (EELKELVQKR…EMSRRYEDQE (69 aa)) are a coiled coil. One can recognise a DDT domain in the interval 603 to 667 (NTIFGDVAMV…LQTLLQDELA (65 aa)). Coiled-coil stretches lie at residues 768–803 (HQKS…METK) and 850–890 (IQAK…FQDA). Residues 785-832 (ANDRKRAEKQKRKEQMETKTDGDVLIKAEKKKESTVKKETPKVLPKEE) show a composition bias toward basic and acidic residues. Residues 785–839 (ANDRKRAEKQKRKEQMETKTDGDVLIKAEKKKESTVKKETPKVLPKEEPEPEDMI) are disordered. Residues 940 to 973 (PPEEEPVLTEEEEEEEEVKKEEETEDGEKEDEGS) form a disordered region. Composition is skewed to acidic residues over residues 941-955 (PEEE…EEEE) and 962-972 (ETEDGEKEDEG). The segment at 1202–1252 (NARCKVCRRKGEDDKLILCDECNKAFHLFCLRPALYRIPAGEWLCPACQPT) adopts a PHD-type zinc-finger fold. 2 disordered regions span residues 1256-1371 (RSSR…KDVE) and 1477-1536 (LRRR…TKQK). A coiled-coil region spans residues 1261–1293 (RNYKEDSEEEEDSEEEDEEESEEEDSEEEHRNT). Positions 1266–1287 (DSEEEEDSEEEDEEESEEEDSE) are enriched in acidic residues. Residues 1297–1316 (LRSRKKVKTSSKSKMQKKPA) show a composition bias toward basic residues. The segment covering 1325 to 1350 (KTDTNPSKTSPKSSAKPKSRAAPSSP) has biased composition (low complexity). At serine 1349 the chain carries Phosphoserine. One can recognise a Bromo domain in the interval 1366–1470 (RKKDVELQKC…EAFVELLQKS (105 aa)). The segment covering 1491–1502 (NSDDDDDDEEED) has biased composition (acidic residues). Positions 1506–1524 (KKQKNGKQGKKASSKRKVE) are enriched in basic residues. Residues 1525-1536 (HSRTEKYQTKQK) show a composition bias toward basic and acidic residues.

Belongs to the WAL family. BAZ1B subfamily. In terms of assembly, interacts with smarca5/snf2h; the interaction is direct and forms the WICH complex. Component of the B-WICH complex. Mn(2+) serves as cofactor.

Its subcellular location is the nucleus. The catalysed reaction is L-tyrosyl-[protein] + ATP = O-phospho-L-tyrosyl-[protein] + ADP + H(+). In terms of biological role, atypical tyrosine-protein kinase that plays a central role in chromatin remodeling and acts as a transcription regulator. Involved in DNA damage response by phosphorylating 'Tyr-142' of histone H2AX (H2AXY142ph). H2AXY142ph plays a central role in DNA repair and acts as a mark that distinguishes between apoptotic and repair responses to genotoxic stress. Essential component of the WICH complex, a chromatin remodeling complex that mobilizes nucleosomes and reconfigures irregular chromatin to a regular nucleosomal array structure. The WICH complex regulates the transcription of various genes, has a role in RNA polymerase I and RNA polymerase III transcription, mediates the histone H2AX phosphorylation at 'Tyr-142', and is involved in the maintenance of chromatin structures during DNA replication processes. This chain is Tyrosine-protein kinase BAZ1B (baz1b), found in Danio rerio (Zebrafish).